The following is a 124-amino-acid chain: Large ribosomal subunit protein bL12 (124 aa).

This sequence belongs to the bacterial ribosomal protein bL12 family. As to quaternary structure, homodimer. Part of the ribosomal stalk of the 50S ribosomal subunit. Forms a multimeric L10(L12)X complex, where L10 forms an elongated spine to which 2 to 4 L12 dimers bind in a sequential fashion. Binds GTP-bound translation factors.

Forms part of the ribosomal stalk which helps the ribosome interact with GTP-bound translation factors. Is thus essential for accurate translation. This chain is Large ribosomal subunit protein bL12, found in Xanthobacter autotrophicus (strain ATCC BAA-1158 / Py2).